A 115-amino-acid polypeptide reads, in one-letter code: Cell division topological specificity factor (115 aa).

The tract at residues 93–115 (QLKEPKNQSELDSPETEGTDQKS) is disordered. The span at 104-115 (DSPETEGTDQKS) shows a compositional bias: acidic residues.

Belongs to the MinE family.

In terms of biological role, prevents the cell division inhibition by proteins MinC and MinD at internal division sites while permitting inhibition at polar sites. This ensures cell division at the proper site by restricting the formation of a division septum at the midpoint of the long axis of the cell. This chain is Cell division topological specificity factor, found in Prochlorococcus marinus (strain NATL1A).